A 367-amino-acid polypeptide reads, in one-letter code: UDP-N-acetylglucosamine--N-acetylmuramyl-(pentapeptide) pyrophosphoryl-undecaprenol N-acetylglucosamine transferase (367 aa).

UDP-N-acetyl-alpha-D-glucosamine contacts are provided by residues 15 to 17, Asn-127, Arg-163, Ser-191, Ile-249, and Gln-294; that span reads TGG.

Belongs to the glycosyltransferase 28 family. MurG subfamily.

The protein localises to the cell inner membrane. It carries out the reaction di-trans,octa-cis-undecaprenyl diphospho-N-acetyl-alpha-D-muramoyl-L-alanyl-D-glutamyl-meso-2,6-diaminopimeloyl-D-alanyl-D-alanine + UDP-N-acetyl-alpha-D-glucosamine = di-trans,octa-cis-undecaprenyl diphospho-[N-acetyl-alpha-D-glucosaminyl-(1-&gt;4)]-N-acetyl-alpha-D-muramoyl-L-alanyl-D-glutamyl-meso-2,6-diaminopimeloyl-D-alanyl-D-alanine + UDP + H(+). It functions in the pathway cell wall biogenesis; peptidoglycan biosynthesis. In terms of biological role, cell wall formation. Catalyzes the transfer of a GlcNAc subunit on undecaprenyl-pyrophosphoryl-MurNAc-pentapeptide (lipid intermediate I) to form undecaprenyl-pyrophosphoryl-MurNAc-(pentapeptide)GlcNAc (lipid intermediate II). The chain is UDP-N-acetylglucosamine--N-acetylmuramyl-(pentapeptide) pyrophosphoryl-undecaprenol N-acetylglucosamine transferase from Burkholderia lata (strain ATCC 17760 / DSM 23089 / LMG 22485 / NCIMB 9086 / R18194 / 383).